The following is a 118-amino-acid chain: Beta-2-microglobulin (118 aa).

The N-terminal stretch at 1-20 (MAVSAALVLLGLLSLSGLDA) is a signal peptide. The region spanning 25-112 (PEVQVYSRHP…HVTLTQPKIV (88 aa)) is the Ig-like C1-type domain. A disulfide bridge connects residues C45 and C99.

This sequence belongs to the beta-2-microglobulin family. Heterodimer of an alpha chain and a beta chain. Beta-2-microglobulin is the beta-chain of major histocompatibility complex class I molecules.

It localises to the secreted. Its function is as follows. Component of the class I major histocompatibility complex (MHC). Involved in the presentation of peptide antigens to the immune system. In Ovis aries (Sheep), this protein is Beta-2-microglobulin (B2M).